The following is a 248-amino-acid chain: Probable transcriptional regulatory protein BBta_6910 (248 aa).

The protein belongs to the TACO1 family.

Its subcellular location is the cytoplasm. In Bradyrhizobium sp. (strain BTAi1 / ATCC BAA-1182), this protein is Probable transcriptional regulatory protein BBta_6910.